We begin with the raw amino-acid sequence, 203 residues long: Endo-type membrane-bound lytic murein transglycosylase A (203 aa).

A signal peptide spans 1–15 (MKLRWFAFLIVLLAG). A lipid anchor (N-palmitoyl cysteine) is attached at Cys-16. Cys-16 is lipidated: S-diacylglycerol cysteine.

The protein belongs to the transglycosylase Slt family.

Its subcellular location is the cell outer membrane. It catalyses the reaction Endolytic cleavage of the (1-&gt;4)-beta-glycosidic linkage between N-acetylmuramic acid (MurNAc) and N-acetylglucosamine (GlcNAc) residues in peptidoglycan with concomitant formation of a 1,6-anhydrobond in the MurNAc residue.. In terms of biological role, murein-degrading enzyme. May play a role in recycling of muropeptides during cell elongation and/or cell division. Preferentially cleaves at a distance of more than two disaccharide units from the ends of the glycan chain. This Escherichia coli (strain K12 / MC4100 / BW2952) protein is Endo-type membrane-bound lytic murein transglycosylase A.